Here is a 1523-residue protein sequence, read N- to C-terminus: Disco-interacting protein 2 homolog A (1523 aa).

The 97-residue stretch at 9-105 (EAAPLPAEVL…TSSASEDEGS (97 aa)) folds into the DMAP1-binding domain. The interval 72 to 110 (KMPMPSKRRSALVHSSVETYTPPDTSSASEDEGSLRRPG) is disordered. Over residues 87-99 (SVETYTPPDTSSA) the composition is skewed to polar residues. Phosphothreonine is present on residues T92 and T115. Positions 132–158 (QGSSTSSSASSTSSHPGGRPAAAPSAS) are disordered. Positions 134–158 (SSTSSSASSTSSHPGGRPAAAPSAS) are enriched in low complexity. 2 consecutive short sequence motifs (PXXP motif; required for interaction with CTTN) follow at residues 235–238 (PKRP) and 259–262 (PNQP).

The protein belongs to the DIP2 family. Interacts with FSTL1; DIP2A may act as a cell surface receptor for FSTL1. Interacts (via N-terminus) with CTTN (via SH3 domain); the interaction promotes acetylation of CTTN and is required for proper synaptic transmission. Interacts with SHANK3. In terms of tissue distribution, detected in heart, liver, spleen, lung, kidney and brain with highest levels in brain (at protein level). In adult cortex, preferentially expressed in excitatory neurons. Broadly expressed in neuronal, reproductive and vascular tissues as well as in heart, kidney, liver and lung with expression detected in neurons, mesenchyme, endothelium, smooth muscle cells and cardiomyocytes. Expressed in ectoderm-derived tissues in the developing embryo. Expressed in the developing nervous system.

Its subcellular location is the cell membrane. It is found in the mitochondrion. The protein localises to the cell projection. The protein resides in the dendritic spine. It catalyses the reaction acetate + ATP + CoA = acetyl-CoA + AMP + diphosphate. Functionally, catalyzes the de novo synthesis of acetyl-CoA in vitro. Promotes acetylation of CTTN, possibly by providing the acetyl donor, ensuring correct dendritic spine morphology and synaptic transmission. Binds to follistatin-related protein FSTL1 and may act as a cell surface receptor for FSTL1, contributing to AKT activation and subsequent FSTL1-induced survival and function of endothelial cells and cardiac myocytes. In Mus musculus (Mouse), this protein is Disco-interacting protein 2 homolog A (Dip2a).